Here is a 582-residue protein sequence, read N- to C-terminus: Colicin-E9 (582 aa).

5 disordered regions span residues 1–74 (MSGG…SGGG), 246–270 (SPGV…NTRD), 294–321 (PDQV…EAAE), 422–489 (ADAA…IADK), and 510–542 (SKDP…QQVG). Over residues 20 to 35 (INGGPTGIGVSGGASD) the composition is skewed to gly residues. The segment covering 36 to 45 (GSGWSSENNP) has biased composition (low complexity). Positions 46–74 (WGGGSGSGIHWGGGSGRGNGGGNGNSGGG) are enriched in gly residues. Basic and acidic residues-rich tracts occupy residues 297–321 (VKQR…EAAE), 430–453 (QERR…ESKR), and 465–476 (PVGDKWLDDAGK). The segment covering 516–529 (SKNLNPSNKSSVSK) has biased composition (low complexity). Zn(2+) is bound by residues H550, H575, and H579.

This sequence belongs to the colicin/pyosin nuclease family.

Functionally, this plasmid-coded bactericidal protein is an endonuclease active on both single- and double-stranded DNA but with undefined specificity. In terms of biological role, colicins are polypeptide toxins produced by and active against E.coli and closely related bacteria. This chain is Colicin-E9 (col), found in Escherichia coli.